A 412-amino-acid chain; its full sequence is Multifunctional CCA protein (412 aa).

2 residues coordinate ATP: G8 and R11. G8 and R11 together coordinate CTP. Mg(2+)-binding residues include D21 and D23. Residues R91, R137, and R140 each coordinate ATP. CTP-binding residues include R91, R137, and R140. Positions T228–W329 constitute an HD domain.

The protein belongs to the tRNA nucleotidyltransferase/poly(A) polymerase family. Bacterial CCA-adding enzyme type 1 subfamily. Monomer. Can also form homodimers and oligomers. Mg(2+) is required as a cofactor. It depends on Ni(2+) as a cofactor.

It catalyses the reaction a tRNA precursor + 2 CTP + ATP = a tRNA with a 3' CCA end + 3 diphosphate. The enzyme catalyses a tRNA with a 3' CCA end + 2 CTP + ATP = a tRNA with a 3' CCACCA end + 3 diphosphate. Its function is as follows. Catalyzes the addition and repair of the essential 3'-terminal CCA sequence in tRNAs without using a nucleic acid template. Adds these three nucleotides in the order of C, C, and A to the tRNA nucleotide-73, using CTP and ATP as substrates and producing inorganic pyrophosphate. tRNA 3'-terminal CCA addition is required both for tRNA processing and repair. Also involved in tRNA surveillance by mediating tandem CCA addition to generate a CCACCA at the 3' terminus of unstable tRNAs. While stable tRNAs receive only 3'-terminal CCA, unstable tRNAs are marked with CCACCA and rapidly degraded. The polypeptide is Multifunctional CCA protein (Escherichia coli O157:H7).